The following is a 276-amino-acid chain: 2-dehydro-3-deoxyphosphooctonate aldolase (276 aa).

Belongs to the KdsA family.

The protein resides in the cytoplasm. It carries out the reaction D-arabinose 5-phosphate + phosphoenolpyruvate + H2O = 3-deoxy-alpha-D-manno-2-octulosonate-8-phosphate + phosphate. It participates in carbohydrate biosynthesis; 3-deoxy-D-manno-octulosonate biosynthesis; 3-deoxy-D-manno-octulosonate from D-ribulose 5-phosphate: step 2/3. It functions in the pathway bacterial outer membrane biogenesis; lipopolysaccharide biosynthesis. In Helicobacter acinonychis (strain Sheeba), this protein is 2-dehydro-3-deoxyphosphooctonate aldolase.